A 231-amino-acid polypeptide reads, in one-letter code: Orotidine 5'-phosphate decarboxylase (231 aa).

Substrate is bound by residues Asp11, Lys34, 61–70, Thr117, Arg179, Gln188, Gly208, and Arg209; that span reads DLKLHDIPNT. Lys63 serves as the catalytic Proton donor.

Belongs to the OMP decarboxylase family. Type 1 subfamily. Homodimer.

The catalysed reaction is orotidine 5'-phosphate + H(+) = UMP + CO2. It functions in the pathway pyrimidine metabolism; UMP biosynthesis via de novo pathway; UMP from orotate: step 2/2. Its function is as follows. Catalyzes the decarboxylation of orotidine 5'-monophosphate (OMP) to uridine 5'-monophosphate (UMP). This Streptococcus suis (strain 98HAH33) protein is Orotidine 5'-phosphate decarboxylase.